We begin with the raw amino-acid sequence, 208 residues long: dITP/XTP pyrophosphatase (208 aa).

Substrate is bound at residue 16–21; it reads SNNKGK. Aspartate 79 (proton acceptor) is an active-site residue. Aspartate 79 contributes to the Mg(2+) binding site. Residues serine 80, 166-169, lysine 189, and 194-195 contribute to the substrate site; these read FGYD and HR.

The protein belongs to the HAM1 NTPase family. Homodimer. Mg(2+) serves as cofactor.

The catalysed reaction is XTP + H2O = XMP + diphosphate + H(+). It carries out the reaction dITP + H2O = dIMP + diphosphate + H(+). It catalyses the reaction ITP + H2O = IMP + diphosphate + H(+). Its function is as follows. Pyrophosphatase that catalyzes the hydrolysis of nucleoside triphosphates to their monophosphate derivatives, with a high preference for the non-canonical purine nucleotides XTP (xanthosine triphosphate), dITP (deoxyinosine triphosphate) and ITP. Seems to function as a house-cleaning enzyme that removes non-canonical purine nucleotides from the nucleotide pool, thus preventing their incorporation into DNA/RNA and avoiding chromosomal lesions. The sequence is that of dITP/XTP pyrophosphatase from Acinetobacter baumannii (strain ACICU).